Consider the following 256-residue polypeptide: Cell division protein ZapD (256 aa).

Belongs to the ZapD family. In terms of assembly, interacts with FtsZ.

It is found in the cytoplasm. Functionally, cell division factor that enhances FtsZ-ring assembly. Directly interacts with FtsZ and promotes bundling of FtsZ protofilaments, with a reduction in FtsZ GTPase activity. This Aromatoleum aromaticum (strain DSM 19018 / LMG 30748 / EbN1) (Azoarcus sp. (strain EbN1)) protein is Cell division protein ZapD.